A 420-amino-acid chain; its full sequence is MVEQDPFEIAVKQLERAAQYMKISEEALEFLKRPQRIVEVTIPVEMDDGTVKVFTGFRVQYNWARGPTKGGIRWHPEETLSTVKALAAWMTWKTAVMDLPYGGGKGGIIVDPKKLSDREKERLARGYIRAIYDVISPYEDIPAPDVYTNPQIMAWMMDEYEAISRRKTPAFGIITGKPLSIGGSLGRNEATARGASYTIREARKVLGWGDLKGKTIAIQGYGNAGYYLAKIMSEDYGMKVVAVSDSKGGIYNPDGLNADEVLKWKQEHGSVKDFPGATNITNEELLELEVDVLAPAAIEEVITKKNADNIKAKIVAEVANGPVTPEADEILFEKGILQIPDFLCNAGGVTVSYFEWVQNITGYYWTLEEVREKLDKKMTKAFYDVYNTAKEKNIHMRDADYVVAVQRVYQAMLDRGWVKH.

The active site involves Lys-105. 220 to 226 (GYGNAGY) serves as a coordination point for NAD(+).

The protein belongs to the Glu/Leu/Phe/Val dehydrogenases family. As to quaternary structure, homohexamer.

The protein resides in the cytoplasm. The enzyme catalyses L-glutamate + NAD(+) + H2O = 2-oxoglutarate + NH4(+) + NADH + H(+). The catalysed reaction is L-glutamate + NADP(+) + H2O = 2-oxoglutarate + NH4(+) + NADPH + H(+). The sequence is that of Glutamate dehydrogenase (gdhA) from Pyrococcus endeavori.